A 144-amino-acid chain; its full sequence is Large ribosomal subunit protein uL13 (144 aa).

It belongs to the universal ribosomal protein uL13 family. In terms of assembly, part of the 50S ribosomal subunit.

Functionally, this protein is one of the early assembly proteins of the 50S ribosomal subunit, although it is not seen to bind rRNA by itself. It is important during the early stages of 50S assembly. The chain is Large ribosomal subunit protein uL13 from Mycoplasma mobile (strain ATCC 43663 / 163K / NCTC 11711) (Mesomycoplasma mobile).